The chain runs to 186 residues: Proline-rich protein 3 (186 aa).

Residues 1–97 form a disordered region; the sequence is MPKRKKQNQP…LGPRSSPYGR (97 aa). 2 stretches are compositionally biased toward pro residues: residues 33–44 and 67–79; these read MGPPSLLGPPPM and MIPP…PPPR. The C3H1-type zinc-finger motif lies at 153-181; that stretch reads KSDRPVCRHFSKKGHCRYEDHCAFYHPGV.

The polypeptide is Proline-rich protein 3 (Prr3) (Rattus norvegicus (Rat)).